The following is a 936-amino-acid chain: Translation initiation factor IF-2 (936 aa).

Positions 102–332 (PEPGPVLKKD…SGSRQKFRKM (231 aa)) are disordered. Positions 108–119 (LKKDHVHEEPEK) are enriched in basic and acidic residues. Positions 127 to 137 (SEPEVEPEVEP) are enriched in acidic residues. The segment covering 151 to 160 (PTEAVSVPEP) has biased composition (low complexity). Over residues 182-194 (QSSTMKAQASPEM) the composition is skewed to polar residues. Basic and acidic residues-rich tracts occupy residues 217-227 (SALDRGSESDR) and 237-267 (KEQADELKGEFENAGKAEGDKKPAKSGEAKT). Residues 272 to 281 (KAAGTTGSAA) show a composition bias toward low complexity. Over residues 287–297 (SKKKKGGKKKK) the composition is skewed to basic residues. The tr-type G domain maps to 433–603 (IRPPVVTIMG…LMEAEIRELK (171 aa)). The interval 442 to 449 (GHVDHGKT) is G1. GTP is bound at residue 442–449 (GHVDHGKT). Residues 467–471 (GITQH) form a G2 region. Residues 489 to 492 (DTPG) form a G3 region. GTP is bound by residues 489–493 (DTPGH) and 543–546 (NKID). Residues 543–546 (NKID) form a G4 region. Residues 579–581 (SAK) are G5.

Belongs to the TRAFAC class translation factor GTPase superfamily. Classic translation factor GTPase family. IF-2 subfamily.

It localises to the cytoplasm. Functionally, one of the essential components for the initiation of protein synthesis. Protects formylmethionyl-tRNA from spontaneous hydrolysis and promotes its binding to the 30S ribosomal subunits. Also involved in the hydrolysis of GTP during the formation of the 70S ribosomal complex. In Prosthecochloris aestuarii (strain DSM 271 / SK 413), this protein is Translation initiation factor IF-2.